The following is a 451-amino-acid chain: Tubulin gamma-1 chain (451 aa).

At Ser131 the chain carries Phosphoserine; by BRSK1. 142-148 lines the GTP pocket; that stretch reads AGGTGSG.

Belongs to the tubulin family. In terms of assembly, component of the gamma-tubulin ring complex (gTuRC) consisting of TUBGCP2, TUBGCP3, TUBGCP4, TUBGCP5 and TUBGCP6 and gamma-tubulin TUBG1 or TUBG2. TUBGCP2, TUBGCP3, TUBGCP4, TUBGCP5 and TUBGCP6 assemble in a 5:5:2:1:1 stoichiometry; each is associated with a gamma-tubulin, thereby arranging 14 gamma-tubulins in a helical manner. Gamma-tubulin at the first position is blocked by TUBGCP3 at the last position, allowing 13 protafilaments to grow into a microtubule. The gTuRC (via TUBGCP3 and TUBGCP6) interacts with ACTB and MZT1; the interactions form a luminal bridge that stabilizes the initial structure during complex assembly. The gTuRC (via TUBGCP2) interacts with MZT2A/MZT2B and CDK5RAP2 (via CM1 motif); the interactions play a role in gTuRC activation. Interacts with alpha-beta tubulin heterodimers; the interaction allows microtubules to nucleate from the gTuRC. Interacts with B9D2. Interacts with CDK5RAP2; the interaction is leading to centrosomal localization of TUBG1 and CDK5RAP2. Interacts with CIMAP3. Interacts with SAS6 and NUP62 at the centrosome. Interacts with EML3 (phosphorylated at 'Thr-881') and HAUS8. Interacts with DNM2; this interaction may participate in centrosome cohesion. Interacts with CCDC66. Phosphorylation at Ser-131 by BRSK1 regulates centrosome duplication, possibly by mediating relocation of gamma-tubulin and its associated proteins from the cytoplasm to the centrosome.

It is found in the cytoplasm. The protein localises to the cytoskeleton. It localises to the microtubule organizing center. The protein resides in the centrosome. Its subcellular location is the spindle. In terms of biological role, tubulin is the major constituent of microtubules, protein filaments consisting of alpha- and beta-tubulin heterodimers. Gamma-tubulin is a key component of the gamma-tubulin ring complex (gTuRC) which mediates microtubule nucleation. The gTuRC regulates the minus-end nucleation of alpha-beta tubulin heterodimers that grow into microtubule protafilaments, a critical step in centrosome duplication and spindle formation. The protein is Tubulin gamma-1 chain of Bos taurus (Bovine).